The primary structure comprises 118 residues: Small ribosomal subunit protein uS13 (118 aa).

The disordered stretch occupies residues 91 to 118; it reads HRRSLPVRGQRTKTNARTRKGPRKPIRK.

This sequence belongs to the universal ribosomal protein uS13 family. In terms of assembly, part of the 30S ribosomal subunit. Forms a loose heterodimer with protein S19. Forms two bridges to the 50S subunit in the 70S ribosome.

Located at the top of the head of the 30S subunit, it contacts several helices of the 16S rRNA. In the 70S ribosome it contacts the 23S rRNA (bridge B1a) and protein L5 of the 50S subunit (bridge B1b), connecting the 2 subunits; these bridges are implicated in subunit movement. Contacts the tRNAs in the A and P-sites. This chain is Small ribosomal subunit protein uS13, found in Marinomonas sp. (strain MWYL1).